A 125-amino-acid polypeptide reads, in one-letter code: Glycine cleavage system H protein (125 aa).

Positions 22-104 (SYVIGITDFA…YDTGWILKLE (83 aa)) constitute a Lipoyl-binding domain. N6-lipoyllysine is present on Lys63.

It belongs to the GcvH family. In terms of assembly, the glycine cleavage system is composed of four proteins: P, T, L and H. Requires (R)-lipoate as cofactor.

Functionally, the glycine cleavage system catalyzes the degradation of glycine. The H protein shuttles the methylamine group of glycine from the P protein to the T protein. In terms of biological role, is also involved in protein lipoylation via its role as an octanoyl/lipoyl carrier protein intermediate. In Listeria monocytogenes serotype 4b (strain CLIP80459), this protein is Glycine cleavage system H protein.